The primary structure comprises 378 residues: Queuine tRNA-ribosyltransferase (378 aa).

The active-site Proton acceptor is D89. Residues 89 to 93 (DSGGF), D143, Q187, and G214 each bind substrate. The interval 245–251 (GVGKPED) is RNA binding. Catalysis depends on D264, which acts as the Nucleophile. The tract at residues 269–273 (TRNAR) is RNA binding; important for wobble base 34 recognition. C302, C304, C307, and H333 together coordinate Zn(2+).

It belongs to the queuine tRNA-ribosyltransferase family. As to quaternary structure, homodimer. Within each dimer, one monomer is responsible for RNA recognition and catalysis, while the other monomer binds to the replacement base PreQ1. Zn(2+) serves as cofactor.

It carries out the reaction 7-aminomethyl-7-carbaguanine + guanosine(34) in tRNA = 7-aminomethyl-7-carbaguanosine(34) in tRNA + guanine. Its pathway is tRNA modification; tRNA-queuosine biosynthesis. Functionally, catalyzes the base-exchange of a guanine (G) residue with the queuine precursor 7-aminomethyl-7-deazaguanine (PreQ1) at position 34 (anticodon wobble position) in tRNAs with GU(N) anticodons (tRNA-Asp, -Asn, -His and -Tyr). Catalysis occurs through a double-displacement mechanism. The nucleophile active site attacks the C1' of nucleotide 34 to detach the guanine base from the RNA, forming a covalent enzyme-RNA intermediate. The proton acceptor active site deprotonates the incoming PreQ1, allowing a nucleophilic attack on the C1' of the ribose to form the product. After dissociation, two additional enzymatic reactions on the tRNA convert PreQ1 to queuine (Q), resulting in the hypermodified nucleoside queuosine (7-(((4,5-cis-dihydroxy-2-cyclopenten-1-yl)amino)methyl)-7-deazaguanosine). This is Queuine tRNA-ribosyltransferase from Yersinia enterocolitica serotype O:8 / biotype 1B (strain NCTC 13174 / 8081).